A 156-amino-acid polypeptide reads, in one-letter code: Arginine repressor (156 aa).

It belongs to the ArgR family.

The protein resides in the cytoplasm. It participates in amino-acid biosynthesis; L-arginine biosynthesis [regulation]. Functionally, regulates arginine biosynthesis genes. The protein is Arginine repressor of Salmonella agona (strain SL483).